Consider the following 210-residue polypeptide: Uracil phosphoribosyltransferase (210 aa).

5-phospho-alpha-D-ribose 1-diphosphate-binding positions include R78, R103, and 130 to 138; that span reads DPMLATGGT. Residues I193 and 198–200 each bind uracil; that span reads GDA. Position 199 (D199) interacts with 5-phospho-alpha-D-ribose 1-diphosphate.

The protein belongs to the UPRTase family. The cofactor is Mg(2+).

It catalyses the reaction UMP + diphosphate = 5-phospho-alpha-D-ribose 1-diphosphate + uracil. It participates in pyrimidine metabolism; UMP biosynthesis via salvage pathway; UMP from uracil: step 1/1. With respect to regulation, allosterically activated by GTP. Its function is as follows. Catalyzes the conversion of uracil and 5-phospho-alpha-D-ribose 1-diphosphate (PRPP) to UMP and diphosphate. The sequence is that of Uracil phosphoribosyltransferase from Xanthomonas campestris pv. campestris (strain 8004).